We begin with the raw amino-acid sequence, 220 residues long: Ras-related protein Rab-11B (220 aa).

Residue 18-25 (GDSGVGKS) participates in GTP binding. The Effector region motif lies at 40–48 (KLSTIGVEF). GTP contacts are provided by residues 66–70 (DTAGQ) and 124–127 (NKSD). S-geranylgeranyl cysteine attachment occurs at residues Cys-219 and Cys-220.

It belongs to the small GTPase superfamily. Rab family.

It localises to the cell membrane. This is Ras-related protein Rab-11B (rab11B) from Dictyostelium discoideum (Social amoeba).